Reading from the N-terminus, the 286-residue chain is Hypersensitive-induced response protein 1 (286 aa).

A lipid anchor (N-myristoyl glycine) is attached at Gly2. Positions 114-190 (LDDVFEQKND…EKILQIKRAE (77 aa)) form a coiled coil.

In terms of assembly, self-interacts and forms heteromers. Interacts with NB-LRR class of R proteins before R proteins (e.g. RPS2 or RPM1) are activated by the effectors. Interacts with LRR1.

It is found in the cell membrane. Its function is as follows. Positive regulator of hypersensitive response (HR)-like cell death. May be involved in potassium ion channel regulation. This is Hypersensitive-induced response protein 1 from Arabidopsis thaliana (Mouse-ear cress).